Reading from the N-terminus, the 186-residue chain is Calcium load-activated calcium channel homolog (186 aa).

Over 1-6 (MLGDCL) the chain is Cytoplasmic. Residues 7–27 (LIIAIAFGTALAGEGITWLLV) form a helical membrane-spanning segment. Topologically, residues 28 to 87 (YRSDHYKRLKADMDKKTKKLEKKKQEVGDTNDKNIKRKLEREEERLKATNRDMSMFKMKS) are lumenal. The stretch at 30–86 (SDHYKRLKADMDKKTKKLEKKKQEVGDTNDKNIKRKLEREEERLKATNRDMSMFKMK) forms a coiled coil. Residues 88–108 (MFAIGLAFTALLSTFNSIFEG) traverse the membrane as a helical segment. Residues 109–134 (RVVAKLPFYPIGFIQGLSHRNLIGED) lie on the Cytoplasmic side of the membrane. Positions 135–151 (MTDCSFIFLYILCTMTV) form an intramembrane region, pore-forming. Residues 152-186 (RQNLQKILGFAPSRAMARQQSSPWAPPNSQMNYLR) lie on the Cytoplasmic side of the membrane.

This sequence belongs to the TMCO1 family. In terms of assembly, homodimer and homotetramer.

It localises to the endoplasmic reticulum membrane. Functionally, calcium-selective channel required to prevent calcium stores from overfilling. This chain is Calcium load-activated calcium channel homolog, found in Caenorhabditis elegans.